Reading from the N-terminus, the 429-residue chain is Phosphoribosylamine--glycine ligase (429 aa).

The ATP-grasp domain occupies 109 to 316 (KDFLARHNIP…LVELCLAACE (208 aa)). 135–196 (LREKGAPIVI…EEFLDGEEAS (62 aa)) is an ATP binding site. The tract at residues 212–237 (SQDHKRVGDKDTGPNTGGMGAYSPAP) is disordered. Basic and acidic residues predominate over residues 213 to 223 (QDHKRVGDKDT). Positions 286 and 288 each coordinate Mg(2+).

This sequence belongs to the GARS family. As to quaternary structure, monomer. Mg(2+) is required as a cofactor. It depends on Mn(2+) as a cofactor.

It carries out the reaction 5-phospho-beta-D-ribosylamine + glycine + ATP = N(1)-(5-phospho-beta-D-ribosyl)glycinamide + ADP + phosphate + H(+). The protein operates within purine metabolism; IMP biosynthesis via de novo pathway; N(1)-(5-phospho-D-ribosyl)glycinamide from 5-phospho-alpha-D-ribose 1-diphosphate: step 2/2. The chain is Phosphoribosylamine--glycine ligase from Escherichia coli O157:H7.